A 788-amino-acid polypeptide reads, in one-letter code: Endonuclease MutS2 (788 aa).

Residue 334-341 (GPNTGGKT) coordinates ATP. The 76-residue stretch at 713–788 (LDLRGQRYEE…GTGATIVYLQ (76 aa)) folds into the Smr domain.

It belongs to the DNA mismatch repair MutS family. MutS2 subfamily. As to quaternary structure, homodimer. Binds to stalled ribosomes, contacting rRNA.

In terms of biological role, endonuclease that is involved in the suppression of homologous recombination and thus may have a key role in the control of bacterial genetic diversity. Its function is as follows. Acts as a ribosome collision sensor, splitting the ribosome into its 2 subunits. Detects stalled/collided 70S ribosomes which it binds and splits by an ATP-hydrolysis driven conformational change. Acts upstream of the ribosome quality control system (RQC), a ribosome-associated complex that mediates the extraction of incompletely synthesized nascent chains from stalled ribosomes and their subsequent degradation. Probably generates substrates for RQC. In Lactobacillus johnsonii (strain CNCM I-12250 / La1 / NCC 533), this protein is Endonuclease MutS2.